A 426-amino-acid chain; its full sequence is Glutamate-1-semialdehyde 2,1-aminomutase (426 aa).

Residue lysine 265 is modified to N6-(pyridoxal phosphate)lysine.

This sequence belongs to the class-III pyridoxal-phosphate-dependent aminotransferase family. HemL subfamily. In terms of assembly, homodimer. Pyridoxal 5'-phosphate serves as cofactor.

The protein resides in the cytoplasm. The catalysed reaction is (S)-4-amino-5-oxopentanoate = 5-aminolevulinate. The protein operates within porphyrin-containing compound metabolism; protoporphyrin-IX biosynthesis; 5-aminolevulinate from L-glutamyl-tRNA(Glu): step 2/2. This chain is Glutamate-1-semialdehyde 2,1-aminomutase, found in Escherichia coli O7:K1 (strain IAI39 / ExPEC).